Consider the following 103-residue polypeptide: Large ribosomal subunit protein uL24 (103 aa).

It belongs to the universal ribosomal protein uL24 family. In terms of assembly, part of the 50S ribosomal subunit.

One of two assembly initiator proteins, it binds directly to the 5'-end of the 23S rRNA, where it nucleates assembly of the 50S subunit. Its function is as follows. One of the proteins that surrounds the polypeptide exit tunnel on the outside of the subunit. The protein is Large ribosomal subunit protein uL24 of Enterococcus faecalis (strain ATCC 700802 / V583).